Consider the following 604-residue polypeptide: Glutamine--fructose-6-phosphate aminotransferase [isomerizing] (604 aa).

Cys-2 serves as the catalytic Nucleophile; for GATase activity. Positions 2-219 constitute a Glutamine amidotransferase type-2 domain; the sequence is CGIMGAVSER…EGDSACVTTQ (218 aa). 2 SIS domains span residues 279–427 and 454–594; these read LRAS…DNRA and LASL…VDQP. The For Fru-6P isomerization activity role is filled by Lys-599.

As to quaternary structure, homodimer.

It localises to the cytoplasm. It catalyses the reaction D-fructose 6-phosphate + L-glutamine = D-glucosamine 6-phosphate + L-glutamate. In terms of biological role, catalyzes the first step in hexosamine metabolism, converting fructose-6P into glucosamine-6P using glutamine as a nitrogen source. This chain is Glutamine--fructose-6-phosphate aminotransferase [isomerizing], found in Legionella pneumophila (strain Paris).